Reading from the N-terminus, the 183-residue chain is Hypoxanthine/guanine phosphoribosyltransferase (183 aa).

Belongs to the purine/pyrimidine phosphoribosyltransferase family. Archaeal HPRT subfamily. As to quaternary structure, homodimer.

The protein resides in the cytoplasm. The enzyme catalyses IMP + diphosphate = hypoxanthine + 5-phospho-alpha-D-ribose 1-diphosphate. The catalysed reaction is GMP + diphosphate = guanine + 5-phospho-alpha-D-ribose 1-diphosphate. The protein operates within purine metabolism; IMP biosynthesis via salvage pathway; IMP from hypoxanthine: step 1/1. In terms of biological role, catalyzes a salvage reaction resulting in the formation of IMP that is energically less costly than de novo synthesis. This chain is Hypoxanthine/guanine phosphoribosyltransferase, found in Methanocaldococcus infernus (strain DSM 11812 / JCM 15783 / ME).